An 85-amino-acid chain; its full sequence is Putative membrane protein insertion efficiency factor (85 aa).

It belongs to the UPF0161 family.

Its subcellular location is the cell inner membrane. Could be involved in insertion of integral membrane proteins into the membrane. This Serratia proteamaculans (strain 568) protein is Putative membrane protein insertion efficiency factor.